The sequence spans 314 residues: tRNA dimethylallyltransferase (314 aa).

Residue Gly-9–Thr-16 participates in ATP binding. Substrate is bound at residue Thr-11–Thr-16. The tract at residues Asp-34 to Gln-37 is interaction with substrate tRNA.

It belongs to the IPP transferase family. Monomer. Mg(2+) is required as a cofactor.

It carries out the reaction adenosine(37) in tRNA + dimethylallyl diphosphate = N(6)-dimethylallyladenosine(37) in tRNA + diphosphate. Its function is as follows. Catalyzes the transfer of a dimethylallyl group onto the adenine at position 37 in tRNAs that read codons beginning with uridine, leading to the formation of N6-(dimethylallyl)adenosine (i(6)A). This chain is tRNA dimethylallyltransferase, found in Clostridium tetani (strain Massachusetts / E88).